The primary structure comprises 323 residues: UPF0200/UPF0201 protein AF_1395 (323 aa).

Residues 1–185 (MVLEMKVIAF…EKIRQILLKL (185 aa)) form a UPF0200 region. An ATP-binding site is contributed by 12–19 (GYPLSGKS). A UPF0201 region spans residues 186–323 (AKNVEIEIRT…GRPVKEIDKL (138 aa)).

This sequence in the N-terminal section; belongs to the UPF0200 family. The protein in the C-terminal section; belongs to the UPF0201 family.

This Archaeoglobus fulgidus (strain ATCC 49558 / DSM 4304 / JCM 9628 / NBRC 100126 / VC-16) protein is UPF0200/UPF0201 protein AF_1395.